A 277-amino-acid polypeptide reads, in one-letter code: MAFIIRAQNVSFCYSEGESKSPPVLKDINLQFEKGQFIGIIGHNGSGKSTLAKHFNALLLPTKGNVYVKDMDTKDAKHLWDIRQTAGLVFQNPDNQIVAAIVEEDVAFGPENLGIPPEEIRKRVEYALKAVGMWEYKDFPPHMLSGGQKQRVAIAGIIAMKPECIVLDEPTAMLDPIGRREVISTIKKLNKEEGITVILITHFMEEVVDADRVIVMDDGKVVLDGTPKEVFKEVEVLKKIGLDVPQVTELAHQLRKEGIDIPSDILTIEEMVEFICR.

In terms of domain architecture, ABC transporter spans 5–243; that stretch reads IRAQNVSFCY…VEVLKKIGLD (239 aa). 42–49 is an ATP binding site; that stretch reads GHNGSGKS.

Belongs to the ABC transporter superfamily. Energy-coupling factor EcfA family. Forms a stable energy-coupling factor (ECF) transporter complex composed of 2 membrane-embedded substrate-binding proteins (S component), 2 ATP-binding proteins (A component) and 2 transmembrane proteins (T component).

The protein localises to the cell membrane. In terms of biological role, ATP-binding (A) component of a common energy-coupling factor (ECF) ABC-transporter complex. Unlike classic ABC transporters this ECF transporter provides the energy necessary to transport a number of different substrates. This is Energy-coupling factor transporter ATP-binding protein EcfA1 from Caldanaerobacter subterraneus subsp. tengcongensis (strain DSM 15242 / JCM 11007 / NBRC 100824 / MB4) (Thermoanaerobacter tengcongensis).